The chain runs to 99 residues: Endothelin receptor type B (99 aa).

The Extracellular portion of the chain corresponds to 1–8 (PFGAEMCK). Residues Cys7 and Cys88 are joined by a disulfide bond. A helical transmembrane segment spans residues 9-30 (LVPFIQKASVGITVLSLCALSI). Over 31–51 (DRYRAVASWSRIKGIGIPKWT) the chain is Cytoplasmic. The chain crosses the membrane as a helical span at residues 52 to 76 (AVEIVLIWVVSVVLAVPEAIGFDMI). At 77-99 (TMDYKGSYLRICLLHPVQKTAFM) the chain is on the extracellular side.

Belongs to the G-protein coupled receptor 1 family. Endothelin receptor subfamily. EDNRB sub-subfamily.

It is found in the cell membrane. Non-specific receptor for endothelin 1, 2, and 3. Mediates its action by association with G proteins that activate a phosphatidylinositol-calcium second messenger system. The chain is Endothelin receptor type B (EDNRB) from Macaca fascicularis (Crab-eating macaque).